The following is a 139-amino-acid chain: ATP synthase epsilon chain (139 aa).

Residues 89–110 (EARAEQARAEAEARRREAQSER) are disordered.

It belongs to the ATPase epsilon chain family. F-type ATPases have 2 components, CF(1) - the catalytic core - and CF(0) - the membrane proton channel. CF(1) has five subunits: alpha(3), beta(3), gamma(1), delta(1), epsilon(1). CF(0) has three main subunits: a, b and c.

Its subcellular location is the cell membrane. Produces ATP from ADP in the presence of a proton gradient across the membrane. The chain is ATP synthase epsilon chain from Chloroflexus aurantiacus (strain ATCC 29366 / DSM 635 / J-10-fl).